The chain runs to 541 residues: MAALQYNCDAGLAKAPTFHPSLWGDFFLTYQPPTAPQHVYMKERAELLKEEVREIVKGTNELPKLLDLIITLQRLGLDNHYEIEIDEHLHFIYNSSCDVKDLNLVSLRFYLLRKNGYDVSSDVFLNFKDKDGNFASDDIRSLLSLYNAAYLRTHGEEVLDEAIIFTRRHLEAALTSLESKLADEVSLSLQTPLFRRVRILETRNYIPIYEMEPSRNEAMLEFAKLNFNLLQILYCEELKTVTAWWKQLNIETDLSFIRDRIVEMHFWMAGACSEPKYSLSRVILTKMTAFITILDDIIDTHSTTEEGKLLAKAIDRCSQDANEVLPDYMKHFYMFLLKTFDSCEDELGPNKRYRVFYLKELLKILVRGYSQEIEWRDEHYVPETIDKHLEISRVTVGAFQLACSSFVGMGDIITKEVLDWLLTYPELLKCFTTFVRLSNDITSTKREQTGGHHASTVQCYMMEHSTTMHDACEKIKGLIEDSWKDMMQLYLTPTEQSKVVAQTVVDFARTGDYMYKKTDAFTFSHTIKDMIALLYVEPILF.

Mg(2+) is bound by residues Asp-295, Asp-299, Asn-439, Ser-443, and Glu-447. The DDXXD motif motif lies at 295-299 (DDIID).

The protein belongs to the terpene synthase family. It depends on Mg(2+) as a cofactor. Requires Mn(2+) as cofactor.

It is found in the cytoplasm. The catalysed reaction is (2E,6E)-farnesyl diphosphate = alpha-zingiberene + diphosphate. It functions in the pathway secondary metabolite biosynthesis; terpenoid biosynthesis. Functionally, sesquiterpene synthase converting farnesyl diphosphate into two major products, zingiberene &gt; beta-sesquiphellandrene, and five minor products, 7-epi-sesquithujene, sesquisabinene A, (E)-alpha-bergamotene, (E)-beta-farnesene and beta-bisabolene. Can also accept geranyl diphosphate as substrate, producing nine monoterpenes, with myrcene, limonene and alpha-terpinolene as the major products. The sequence is that of Zingiberene synthase (TPS1) from Sorghum bicolor (Sorghum).